Reading from the N-terminus, the 185-residue chain is Elongation factor P 1 (185 aa).

The protein belongs to the elongation factor P family.

The protein localises to the cytoplasm. The protein operates within protein biosynthesis; polypeptide chain elongation. In terms of biological role, involved in peptide bond synthesis. Stimulates efficient translation and peptide-bond synthesis on native or reconstituted 70S ribosomes in vitro. Probably functions indirectly by altering the affinity of the ribosome for aminoacyl-tRNA, thus increasing their reactivity as acceptors for peptidyl transferase. The chain is Elongation factor P 1 (efp1) from Chlamydia trachomatis serovar D (strain ATCC VR-885 / DSM 19411 / UW-3/Cx).